The following is a 178-amino-acid chain: Large ribosomal subunit protein uL6 (178 aa).

It belongs to the universal ribosomal protein uL6 family. Part of the 50S ribosomal subunit.

Functionally, this protein binds to the 23S rRNA, and is important in its secondary structure. It is located near the subunit interface in the base of the L7/L12 stalk, and near the tRNA binding site of the peptidyltransferase center. The chain is Large ribosomal subunit protein uL6 from Streptococcus pneumoniae serotype 4 (strain ATCC BAA-334 / TIGR4).